A 62-amino-acid chain; its full sequence is DNA-directed RNA polymerase subunit Rpo10 (62 aa).

4 residues coordinate Zn(2+): Cys-6, Cys-9, Cys-43, and Cys-44.

Belongs to the archaeal Rpo10/eukaryotic RPB10 RNA polymerase subunit family. As to quaternary structure, part of the RNA polymerase complex. The cofactor is Zn(2+).

Its subcellular location is the cytoplasm. It catalyses the reaction RNA(n) + a ribonucleoside 5'-triphosphate = RNA(n+1) + diphosphate. DNA-dependent RNA polymerase (RNAP) catalyzes the transcription of DNA into RNA using the four ribonucleoside triphosphates as substrates. This chain is DNA-directed RNA polymerase subunit Rpo10, found in Methanosarcina acetivorans (strain ATCC 35395 / DSM 2834 / JCM 12185 / C2A).